The following is a 249-amino-acid chain: Proteasome subunit alpha type-4 (249 aa).

It belongs to the peptidase T1A family. The 26S proteasome consists of a 20S proteasome core and two 19S regulatory subunits. The 20S proteasome core is composed of 28 subunits that are arranged in four stacked rings, resulting in a barrel-shaped structure. The two end rings are each formed by seven alpha subunits, and the two central rings are each formed by seven beta subunits. The catalytic chamber with the active sites is on the inside of the barrel.

Its subcellular location is the cytoplasm. The protein localises to the nucleus. Its function is as follows. The proteasome is a multicatalytic proteinase complex which is characterized by its ability to cleave peptides with Arg, Phe, Tyr, Leu, and Glu adjacent to the leaving group at neutral or slightly basic pH. The proteasome has an ATP-dependent proteolytic activity. This is Proteasome subunit alpha type-4 (PAC1) from Petunia hybrida (Petunia).